Here is a 212-residue protein sequence, read N- to C-terminus: uncharacterized protein (212 aa).

Positions 53, 74, and 97 each coordinate S-adenosyl-L-methionine.

Belongs to the methyltransferase superfamily. YrrT family.

In terms of biological role, could be a S-adenosyl-L-methionine-dependent methyltransferase. This is an uncharacterized protein from Bacillus thuringiensis (strain Al Hakam).